A 520-amino-acid chain; its full sequence is RNA-binding protein MEX3A (520 aa).

The tract at residues 49 to 111 (GLGEPPAPTA…QPPTAPKGAS (63 aa)) is disordered. The segment covering 60 to 69 (EDGGGGGGGA) has biased composition (gly residues). The span at 73-91 (PAAPPQPAPPPPPAAPPAA) shows a compositional bias: pro residues. KH domains are found at residues 132 to 193 (TTEC…RREI) and 223 to 284 (QVTI…REEI). Ser338 carries the phosphoserine modification. Residues 412–461 (SSSSAKARAGPPGAHRSPATSAGPELAGLPRRPPGEPLQGFSKLGGGGLR) form a disordered region. At Ser462 the chain carries Phosphoserine. An RING-type zinc finger spans residues 469–509 (CMVCFESEVTAALVPCGHNLFCMECAVRICERTDPECPVCH).

Post-translationally, phosphorylated. As to expression, highest levels found in fetal brain and testis. Detected also in thymus, salivary gland and uterus.

It localises to the cytoplasm. Its subcellular location is the nucleus. It is found in the P-body. In terms of biological role, RNA binding protein, may be involved in post-transcriptional regulatory mechanisms. The polypeptide is RNA-binding protein MEX3A (MEX3A) (Homo sapiens (Human)).